The following is a 331-amino-acid chain: Homoserine kinase (331 aa).

This sequence belongs to the pseudomonas-type ThrB family.

It carries out the reaction L-homoserine + ATP = O-phospho-L-homoserine + ADP + H(+). It functions in the pathway amino-acid biosynthesis; L-threonine biosynthesis; L-threonine from L-aspartate: step 4/5. In Burkholderia thailandensis (strain ATCC 700388 / DSM 13276 / CCUG 48851 / CIP 106301 / E264), this protein is Homoserine kinase.